The primary structure comprises 476 residues: 3-isopropylmalate dehydratase large subunit (476 aa).

[4Fe-4S] cluster-binding residues include Cys353, Cys413, and Cys416.

Belongs to the aconitase/IPM isomerase family. LeuC type 1 subfamily. As to quaternary structure, heterodimer of LeuC and LeuD. [4Fe-4S] cluster is required as a cofactor.

It carries out the reaction (2R,3S)-3-isopropylmalate = (2S)-2-isopropylmalate. It participates in amino-acid biosynthesis; L-leucine biosynthesis; L-leucine from 3-methyl-2-oxobutanoate: step 2/4. Its function is as follows. Catalyzes the isomerization between 2-isopropylmalate and 3-isopropylmalate, via the formation of 2-isopropylmaleate. This chain is 3-isopropylmalate dehydratase large subunit, found in Yersinia pseudotuberculosis serotype IB (strain PB1/+).